The following is a 101-amino-acid chain: Large ribosomal subunit protein eL43 (101 aa).

Residues cysteine 40, cysteine 43, cysteine 59, and cysteine 62 each coordinate Zn(2+). The C4-type zinc-finger motif lies at 40-62; sequence CPSCRSLVRLERIAFGIWRCPKC.

It belongs to the eukaryotic ribosomal protein eL43 family. Putative zinc-binding subfamily. As to quaternary structure, part of the 50S ribosomal subunit. Zn(2+) is required as a cofactor.

In terms of biological role, binds to the 23S rRNA. This is Large ribosomal subunit protein eL43 from Pyrobaculum aerophilum (strain ATCC 51768 / DSM 7523 / JCM 9630 / CIP 104966 / NBRC 100827 / IM2).